Consider the following 892-residue polypeptide: Formin-like protein 8 (892 aa).

The N-terminal stretch at 1-23 (MPPAIARFVAIAAVLLCGHVAVA) is a signal peptide. Positions 43-119 (FPIEWTPPPS…SGSGSGHHGG (77 aa)) are disordered. The segment covering 47 to 59 (WTPPPSPPPPPAP) has biased composition (pro residues). Residues 87 to 111 (TTPTSPGTTPSPTTVAADVSKTPSG) show a composition bias toward low complexity. The chain crosses the membrane as a helical span at residues 126–146 (IVAAGAGAAAAVALLGFACAF). Residues 188-457 (PTTPARHHGP…GSGEPRPKLK (270 aa)) form a disordered region. A compositionally biased stretch (basic and acidic residues) spans 210 to 230 (LRSERARRGVSRDEDADHPSP). Composition is skewed to low complexity over residues 268 to 286 (AEAWSSASASSPPTTTTAS), 297 to 306 (FFPPVAAIAA), and 321 to 330 (RTRFSTGSTP). Pro residues predominate over residues 339 to 383 (SPRPVQPSNAPPPPPPPPPPPPPPPPPKLNTAPKPPPPPPPPPSV). A compositionally biased stretch (polar residues) spans 424–436 (AATTVDNNGSTSM). The FH2 domain maps to 446–867 (DGGSGEPRPK…GSARSFRISA (422 aa)).

This sequence belongs to the formin-like family. Class-I subfamily.

The protein resides in the membrane. The polypeptide is Formin-like protein 8 (FH8) (Oryza sativa subsp. japonica (Rice)).